A 43-amino-acid chain; its full sequence is Protein PsbN (43 aa).

The helical transmembrane segment at 5 to 27 (TLIAISISGLIVSFTGYALYTAF) threads the bilayer.

This sequence belongs to the PsbN family.

The protein localises to the plastid. It localises to the chloroplast thylakoid membrane. In terms of biological role, may play a role in photosystem I and II biogenesis. This chain is Protein PsbN, found in Cicer arietinum (Chickpea).